Reading from the N-terminus, the 239-residue chain is Norbelladine 4'-O-methyltransferase 4 (239 aa).

S-adenosyl-L-methionine is bound by residues valine 55, glutamate 77, glycine 79 to valine 80, serine 85, aspartate 103, and alanine 132. An a divalent metal cation-binding site is contributed by aspartate 155. Residue aspartate 157 coordinates S-adenosyl-L-methionine. Aspartate 181 and asparagine 182 together coordinate a divalent metal cation.

Belongs to the class I-like SAM-binding methyltransferase superfamily. Cation-dependent O-methyltransferase family. The cofactor is Mg(2+).

The enzyme catalyses norbelladine + S-adenosyl-L-methionine = 4'-O-methylnorbelladine + S-adenosyl-L-homocysteine + H(+). Its pathway is alkaloid biosynthesis. 4'-O-methyltransferase converting norbelladine to 4'-O-methylnorbelladine. 4'-O-methylnorbelladine is a precursor to all Amaryllidaceae alkaloids such as galanthamine, lycorine and haemanthamine, and including haemanthamine- and crinamine-type alkaloids, promising anticancer agents. This chain is Norbelladine 4'-O-methyltransferase 4, found in Narcissus aff. pseudonarcissus MK-2014 (Daffodil).